Reading from the N-terminus, the 526-residue chain is Choline/ethanolamine transporter FLVCR2 (526 aa).

Positions Met-1–Ser-70 are disordered. At Met-1–Ser-76 the chain is on the cytoplasmic side. Residue Met-1–Arg-84 participates in heme b binding. A run of 5 repeats spans residues Pro-25–His-30, Pro-31–His-36, Pro-37–Asn-42, Pro-43–His-48, and Pro-49–His-54. The span at Pro-25–Ser-56 shows a compositional bias: low complexity. The 8 X 6 AA tandem repeats of P-S-[VS]-S-[VIAG]-[HNP] stretch occupies residues Pro-25–Pro-72. One copy of the 6; approximate repeat lies at Pro-55–Gln-60. A 7; approximate repeat occupies Pro-61–His-66. Repeat unit 8 spans residues Pro-67 to Pro-72. A helical transmembrane segment spans residues Val-77–Gln-101. 2 residues coordinate choline: Asn-98 and Trp-102. Topologically, residues Trp-102–Ser-119 are extracellular. Residues Ala-120–Lys-147 traverse the membrane as a helical segment. The Cytoplasmic portion of the chain corresponds to Phe-148–Gly-149. Residues Leu-150–Leu-169 form a helical membrane-spanning segment. Over Gly-170–Leu-176 the chain is Extracellular. A helical transmembrane segment spans residues Phe-177 to Trp-205. Choline contacts are provided by Gln-191 and Leu-195. Residues Phe-206–Glu-210 are Cytoplasmic-facing. Residues Val-211–Leu-236 form a helical membrane-spanning segment. The Extracellular portion of the chain corresponds to Val-237–Glu-241. The helical transmembrane segment at Asp-242–Val-271 threads the bilayer. Topologically, residues Phe-272 to Asn-307 are cytoplasmic. Residues Leu-308 to His-338 form a helical membrane-spanning segment. Tyr-325 contacts choline. Over Tyr-339–Glu-342 the chain is Extracellular. Residues Glu-343 to Ser-371 traverse the membrane as a helical segment. At Lys-372–Thr-373 the chain is on the cytoplasmic side. Residues Tyr-374–Leu-396 form a helical membrane-spanning segment. Topologically, residues Asn-397–Gly-399 are extracellular. The chain crosses the membrane as a helical span at residues His-400–Leu-429. The Cytoplasmic segment spans residues Thr-430–Ile-437. Residues Ser-438–Asn-463 traverse the membrane as a helical segment. Position 447 (Gln-447) interacts with choline. The Extracellular segment spans residues Tyr-464–Gly-465. The chain crosses the membrane as a helical span at residues Thr-466–Lys-488. Topologically, residues Ala-489–Leu-526 are cytoplasmic. A disordered region spans residues Thr-500–Leu-526. Ser-515 is subject to Phosphoserine.

It belongs to the major facilitator superfamily. Feline leukemia virus subgroup C receptor (TC 2.A.1.28.1) family. As to quaternary structure, interacts with components of electron transfer chain complexes III, IV and V including CYC1, NDUFA4, COX4I1, ATP5PD and ATP5F1C; these interactions occur in the absence of heme and are disrupted upon heme binding. Interacts with ATP2A2; this interaction occurs in the absence of heme and promotes ATP2A2 proteasomal degradation; the complex is dissociated upon heme binding. Interacts with HMOX1; this interaction is potentiated in the presence of heme. Expressed in non-hematopoietic tissues, with relative abundant expression in brain, placenta, lung, liver and kidney. Also expressed in hematopoietic tissues (fetal liver, spleen, lymph node, thymus, leukocytes and bone marrow). Found in acidophil cells of the pituitary that secrete growth hormone and prolactin (at protein level).

Its subcellular location is the cell membrane. It localises to the mitochondrion membrane. It is found in the endoplasmic reticulum membrane. It carries out the reaction choline(out) = choline(in). The catalysed reaction is ethanolamine(in) = ethanolamine(out). The enzyme catalyses heme b(in) = heme b(out). Choline uniporter that specifically mediates choline uptake at the blood-brain-barrier. Responsible for the majority of choline uptake across the blood-brain-barrier from the circulation into the brain. Choline, a nutrient critical for brain development, is a precursor of phosphatidylcholine, as well as betaine. Also mediates transport of ethanolamine. Choline and ethanolamine transport is not coupled with proton transport and is exclusively driven by the choline gradient across the plasma membrane. However, the presence of an inwardly directed proton gradient enhances choline uptake. Also acts as a heme b transporter. Required to regulate mitochondrial respiration processes, ATP synthesis and thermogenesis. At low heme levels, interacts with components of electron transfer chain (ETC) complexes and ATP2A2, leading to ubiquitin-mediated degradation of ATP2A2 and inhibition of thermogenesis. Upon heme binding, dissociates from ETC complexes to allow switching from mitochondrial ATP synthesis to thermogenesis. In Homo sapiens (Human), this protein is Choline/ethanolamine transporter FLVCR2.